A 342-amino-acid polypeptide reads, in one-letter code: L-lysine 2,3-aminomutase (342 aa).

The region spanning His-106–Glu-329 is the Radical SAM core domain. Residues Cys-120, Cys-124, and Cys-127 each contribute to the [4Fe-4S] cluster site. Lys-332 bears the N6-(pyridoxal phosphate)lysine mark.

It belongs to the radical SAM superfamily. KamA family. It depends on [4Fe-4S] cluster as a cofactor. Requires pyridoxal 5'-phosphate as cofactor.

The catalysed reaction is L-lysine = D-beta-lysine. Its function is as follows. With EpmA is involved in the beta-lysylation step of the post-translational modification of translation elongation factor P (EF-P) on 'Lys-34'. EpmB appears to act before EpmA. Displays lysine 2,3-aminomutase activity, producing (R)-beta-lysine from (S)-alpha-lysine (L-lysine). Cannot use (S)-ornithine or (R)-alpha-lysine as a substrate. In Escherichia coli (strain K12), this protein is L-lysine 2,3-aminomutase (epmB).